The primary structure comprises 477 residues: MIRRLQDSGDLVRAFPRVHFVGIGGTGMSGIAEVMLTLGYEVSGSDNADNAATRRLAKLGARVMRGHSAANVLGTDCVVVSSAIREDNPELMEARSQRIPIMPRAAMLAELMRFRRGIAVAGTHGKTTTTSLAAAVLSEGGLDPTFVIGGQLLAAGANAKLGGGQWLVAEADESDGSFLRLNPLMAVITNIDADHLENYGNDFARVQAAFAEFLQRLPFYGLALLCIDDPEVAALAGKTPRHVMSYGMSENADVRAEDVVQDGPRMRFTLRLPEGTTTPVTLALPGRHNVLNALAAAAIGWQLGVAPDTIARALENFAGIGRRFNDLGEVTTSSGARVRVVDDYGHHPRELEAVFAAARGGWPDKRLVVAFQPHRYSRTRDQFDAFAAVLSTVDALVLSEVYPAGEAPIPGADSRALARAIRARGRSEPVVVGQIAGLAEVLPDVLQDGDLLLMMGAGDIGYVAQHIISNGFVGEQA.

Position 122–128 (122–128) interacts with ATP; the sequence is GTHGKTT.

The protein belongs to the MurCDEF family.

The protein localises to the cytoplasm. It carries out the reaction UDP-N-acetyl-alpha-D-muramate + L-alanine + ATP = UDP-N-acetyl-alpha-D-muramoyl-L-alanine + ADP + phosphate + H(+). It functions in the pathway cell wall biogenesis; peptidoglycan biosynthesis. Functionally, cell wall formation. The sequence is that of UDP-N-acetylmuramate--L-alanine ligase from Xanthomonas euvesicatoria pv. vesicatoria (strain 85-10) (Xanthomonas campestris pv. vesicatoria).